Here is a 277-residue protein sequence, read N- to C-terminus: Energy-coupling factor transporter ATP-binding protein EcfA1 (277 aa).

Residues 5 to 240 (LEVENLVFKY…SEDMVEIGLD (236 aa)) form the ABC transporter domain. ATP is bound at residue 40-47 (GQNGSGKS).

The protein belongs to the ABC transporter superfamily. Energy-coupling factor EcfA family. As to quaternary structure, forms a stable energy-coupling factor (ECF) transporter complex composed of 2 membrane-embedded substrate-binding proteins (S component), 2 ATP-binding proteins (A component) and 2 transmembrane proteins (T component).

It localises to the cell membrane. In terms of biological role, ATP-binding (A) component of a common energy-coupling factor (ECF) ABC-transporter complex. Unlike classic ABC transporters this ECF transporter provides the energy necessary to transport a number of different substrates. This is Energy-coupling factor transporter ATP-binding protein EcfA1 from Lactococcus lactis subsp. lactis (strain IL1403) (Streptococcus lactis).